A 254-amino-acid polypeptide reads, in one-letter code: Alcohol dehydrogenase (254 aa).

10 to 33 (FVAGLGGIGLDTSREIVKSGPKNL) provides a ligand contact to NAD(+). Ser-138 lines the substrate pocket. Tyr-151 serves as the catalytic Proton acceptor.

This sequence belongs to the short-chain dehydrogenases/reductases (SDR) family. Homodimer.

It carries out the reaction a primary alcohol + NAD(+) = an aldehyde + NADH + H(+). The enzyme catalyses a secondary alcohol + NAD(+) = a ketone + NADH + H(+). The protein is Alcohol dehydrogenase (Adh) of Drosophila hawaiiensis (Fruit fly).